The sequence spans 156 residues: Small ribosomal subunit protein uS7 (156 aa).

In terms of assembly, part of the 30S ribosomal subunit. Contacts proteins S9 and S11.

In terms of biological role, one of the primary rRNA binding proteins, it binds directly to 16S rRNA where it nucleates assembly of the head domain of the 30S subunit. Is located at the subunit interface close to the decoding center, probably blocks exit of the E-site tRNA. The protein is Small ribosomal subunit protein uS7 of Rhodopseudomonas palustris (strain ATCC BAA-98 / CGA009).